The sequence spans 807 residues: Spondin-1 (807 aa).

The signal sequence occupies residues 1-28 (MRLSPAPLKLSRTPALLALALPLAAALA). The 166-residue stretch at 29–194 (FSDETLDKVP…DSTFDGVTDK (166 aa)) folds into the Reelin domain. 17 disulfides stabilise this stretch: cysteine 44–cysteine 128, cysteine 156–cysteine 182, cysteine 199–cysteine 336, cysteine 200–cysteine 340, cysteine 202–cysteine 415, cysteine 443–cysteine 480, cysteine 454–cysteine 489, cysteine 459–cysteine 494, cysteine 502–cysteine 538, cysteine 513–cysteine 517, cysteine 548–cysteine 554, cysteine 559–cysteine 595, cysteine 570–cysteine 574, cysteine 605–cysteine 610, cysteine 615–cysteine 650, cysteine 626–cysteine 630, and cysteine 660–cysteine 665. The Spondin domain occupies 195 to 388 (PILDCCACGT…LTSLDHPQSP (194 aa)). Asparagine 214 carries an N-linked (GlcNAc...) asparagine glycan. 3 residues coordinate Ca(2+): aspartate 325, aspartate 354, and aspartate 358. TSP type-1 domains are found at residues 442-495 (TCIY…PGCS), 501-555 (TCTM…EECS), 558-611 (SCLM…PECH), 614-666 (PCLL…PECP), 668-721 (DCEL…RKCL), and 754-806 (GCRM…NVHP). Residue tryptophan 448 is glycosylated (C-linked (Man) tryptophan). C-linked (Man) tryptophan; partial glycosylation is present at tryptophan 451. The C-linked (Man) tryptophan glycan is linked to tryptophan 507. A C-linked (Man) tryptophan; partial glycan is attached at tryptophan 510. A glycan (C-linked (Man) tryptophan) is linked at tryptophan 564. Tryptophan 620 carries a C-linked (Man) tryptophan; partial glycan. Residue tryptophan 623 is glycosylated (C-linked (Man) tryptophan). The C-linked (Man) tryptophan glycan is linked to tryptophan 674. The N-linked (GlcNAc...) asparagine glycan is linked to asparagine 681.

Binds to the central extracellular domain of APP and inhibits beta-secretase cleavage of APP. In terms of tissue distribution, highest expression in lung, lower expression in brain, heart, kidney, liver and testis, and lowest expression in pancreas, skeletal muscle and ovary. Not expressed in spleen.

It localises to the secreted. The protein localises to the extracellular space. Its subcellular location is the extracellular matrix. In terms of biological role, cell adhesion protein that promotes the attachment of spinal cord and sensory neuron cells and the outgrowth of neurites in vitro. May contribute to the growth and guidance of axons in both the spinal cord and the PNS. Major factor for vascular smooth muscle cell. The sequence is that of Spondin-1 (SPON1) from Homo sapiens (Human).